The sequence spans 858 residues: Tetratricopeptide repeat protein 7A (858 aa).

Residue Ser51 is modified to Phosphoserine. TPR repeat units lie at residues 121–157 (CEAM…MENK), 177–210 (ERLP…AQVF), 414–447 (FHLW…RPSD), 497–531 (YSLQ…APSD), 533–565 (QVIL…RKDD), and 566–599 (AHAL…HPEN). Ser182 is modified (phosphoserine). A phosphoserine mark is found at Ser647, Ser678, Ser679, and Ser690. Thr693 bears the Phosphothreonine mark. 3 TPR repeats span residues 745-778 (HSVL…NPDG), 780-812 (RIMH…QSTC), and 813-846 (HEAW…EASS).

As to quaternary structure, component of a phosphatidylinositol 4-kinase (PI4K) complex, composed of PI4KA, EFR3 (EFR3A or EFR3B), TTC7 (TTC7A or TTC7B) and HYCC (HYCC1 or HYCC2). Interacts with PI4KA. Interaction with PI4KA is direct. Interacts with EFR3 (EFR3A or EFR3B), interaction is direct. Interacts with HYCC (HYCC1 or HYCC2), interaction is direct. Association with the PI4K complex is strongly reduced by TMEM150A. Expressed in epithelial cells of the intestine, thymus, and pancreas (at protein level).

The protein localises to the cytoplasm. Its subcellular location is the cell membrane. Functionally, component of a complex required to localize phosphatidylinositol 4-kinase (PI4K) to the plasma membrane. The complex acts as a regulator of phosphatidylinositol 4-phosphate (PtdIns(4)P) synthesis. In the complex, plays a central role in bridging PI4KA to EFR3B and HYCC1, via direct interactions. This chain is Tetratricopeptide repeat protein 7A, found in Homo sapiens (Human).